Here is a 295-residue protein sequence, read N- to C-terminus: MPWIQLKINTSGKVAEQLGDTMIESGAVSVTFQDTHDTPVFEPLPGETRLWGDTDAIALYDAETDMNAVIAMLEQEPLLGVGFKHKIEQLEDKDWEREWMDNFHPMQFGKRLWICPSWREIPDPSAVNVMLDPGLAFGTGTHPTTSLCLQWLDGLDLEGKTIIDFGCGSGILAIAALKLGAARAIGIDIDPQAIQASRDNAQRNGVSERLELYLPKDQPADLSADVVVANILAGPLRELAPLISDLPKAGGHLGLSGVLSTQADGVAEAYADKFTLDPVAEREEWCRITGQRHTS.

The S-adenosyl-L-methionine site is built by T145, G166, D188, and N230.

The protein belongs to the methyltransferase superfamily. PrmA family.

Its subcellular location is the cytoplasm. It catalyses the reaction L-lysyl-[protein] + 3 S-adenosyl-L-methionine = N(6),N(6),N(6)-trimethyl-L-lysyl-[protein] + 3 S-adenosyl-L-homocysteine + 3 H(+). In terms of biological role, methylates ribosomal protein L11. The sequence is that of Ribosomal protein L11 methyltransferase from Pectobacterium atrosepticum (strain SCRI 1043 / ATCC BAA-672) (Erwinia carotovora subsp. atroseptica).